A 190-amino-acid chain; its full sequence is Major intrinsically disordered NOTCH2-binding receptor 1-like (190 aa).

S79 is subject to Phosphoserine. Residues N109 and N125 are each glycosylated (N-linked (GlcNAc...) asparagine). Residues 169–189 (GLILLVVISILVTIVTIITFF) form a helical membrane-spanning segment.

This sequence belongs to the MINAR family. In terms of assembly, interacts with NOTCH2. Highly expressed in the auditory hair cells.

Its subcellular location is the lysosome membrane. It is found in the endoplasmic reticulum membrane. In terms of biological role, binds cholesterol and may regulate the distribution and homeostasis of cholesterol in hair cells. May play a role in angiogenesis. This chain is Major intrinsically disordered NOTCH2-binding receptor 1-like, found in Homo sapiens (Human).